We begin with the raw amino-acid sequence, 123 residues long: Protein Wnt-3b (123 aa).

A lipid anchor (O-palmitoleoyl serine; by PORCN) is attached at S1. A disulfide bridge connects residues C89 and C104. N90 carries N-linked (GlcNAc...) asparagine glycosylation.

This sequence belongs to the Wnt family. Palmitoleoylation is required for efficient binding to frizzled receptors. Depalmitoleoylation leads to Wnt signaling pathway inhibition.

It is found in the secreted. The protein localises to the extracellular space. The protein resides in the extracellular matrix. Ligand for members of the frizzled family of seven transmembrane receptors. Probable developmental protein. May be a signaling molecule which affects the development of discrete regions of tissues. Is likely to signal over only few cell diameters. This is Protein Wnt-3b (WNT-3B) from Plethodon jordani (Red-cheeked salamander).